The primary structure comprises 571 residues: Apolipoprotein N-acyltransferase (571 aa).

The next 6 helical transmembrane spans lie at 13-33, 51-68, 72-92, 118-138, 152-172, and 199-219; these read VVLWLSGPPFAIGPLVFIALV, LYAASLAYWLLSLQGLRY, LMFLPWIALSGYLAIYPVLFI, LVAAVVWVGLEWIRNYFFTGI, MLIQIADLGGTYAVSFVIVCV, and LVTAGGLLIATMVYGAMSMNA. In terms of domain architecture, CN hydrolase spans 234–527; it reads NELTVYEQDI…SDVIYAQPRR (294 aa). E275 acts as the Proton acceptor in catalysis. Residue K380 is part of the active site. C430 acts as the Nucleophile in catalysis. Residues 542-562 traverse the membrane as a helical segment; it reads AGLMGAATLCGLAWMTFEWLM.

The protein belongs to the CN hydrolase family. Apolipoprotein N-acyltransferase subfamily.

The protein localises to the cell inner membrane. The catalysed reaction is N-terminal S-1,2-diacyl-sn-glyceryl-L-cysteinyl-[lipoprotein] + a glycerophospholipid = N-acyl-S-1,2-diacyl-sn-glyceryl-L-cysteinyl-[lipoprotein] + a 2-acyl-sn-glycero-3-phospholipid + H(+). Its pathway is protein modification; lipoprotein biosynthesis (N-acyl transfer). Functionally, catalyzes the phospholipid dependent N-acylation of the N-terminal cysteine of apolipoprotein, the last step in lipoprotein maturation. In Rhodopirellula baltica (strain DSM 10527 / NCIMB 13988 / SH1), this protein is Apolipoprotein N-acyltransferase.